The following is a 355-amino-acid chain: Elongation factor Ts (355 aa).

Residues 82 to 85 form an involved in Mg(2+) ion dislocation from EF-Tu region; that stretch reads TDFV.

This sequence belongs to the EF-Ts family.

It is found in the cytoplasm. Functionally, associates with the EF-Tu.GDP complex and induces the exchange of GDP to GTP. It remains bound to the aminoacyl-tRNA.EF-Tu.GTP complex up to the GTP hydrolysis stage on the ribosome. The sequence is that of Elongation factor Ts (tsf) from Helicobacter pylori (strain ATCC 700392 / 26695) (Campylobacter pylori).